Here is a 446-residue protein sequence, read N- to C-terminus: tRNA (guanine-N(7)-)-methyltransferase non-catalytic subunit TRM82 (446 aa).

The tract at residues 67–97 (LTQTSEDTEQENTAPYKKQKSSVSKPIKVPK) is disordered. Residues 87–97 (SSVSKPIKVPK) are compositionally biased toward low complexity. 3 WD repeats span residues 107 to 147 (PIYN…TENC), 202 to 243 (GHVS…IVKH), and 247 to 287 (GHRE…LLSK).

It belongs to the WD repeat TRM82 family. In terms of assembly, forms a heterodimer with the catalytic subunit TRM8.

It is found in the nucleus. The protein operates within tRNA modification; N(7)-methylguanine-tRNA biosynthesis. Its function is as follows. Required for the formation of N(7)-methylguanine at position 46 (m7G46) in tRNA. In the complex, it is required to stabilize and induce conformational changes of the catalytic subunit. This Debaryomyces hansenii (strain ATCC 36239 / CBS 767 / BCRC 21394 / JCM 1990 / NBRC 0083 / IGC 2968) (Yeast) protein is tRNA (guanine-N(7)-)-methyltransferase non-catalytic subunit TRM82.